The chain runs to 428 residues: MSPGAFRVALLPLFLLVCVTQQKPLQNWEQASPGENAHSSLGLSGAGEEGVFDLQMFLENMKVDFLRSLNLSGIPSQDKTRAEPPQYMIDLYNRYTTDKSSTPASNIVRSFSVEDAISTAATEDFPFQKHILIFNISIPRHEQITRAELRLYVSCQNDVDSTHGLEGSMVVYDVLEDSETWDQATGTKTFLVSQDIRDEGWETLEVSSAVKRWVRADSTTNKNKLEVTVQSHRESCDTLDISVPPGSKNLPFFVVFSNDRSNGTKETRLELKEMIGHEQETMLVKTAKNAYQVAGESQEEEGLDGYTAVGPLLARRKRSTGASSHCQKTSLRVNFEDIGWDSWIIAPKEYDAYECKGGCFFPLADDVTPTKHAIVQTLVHLKFPTKVGKACCVPTKLSPISILYKDDMGVPTLKYHYEGMSVAECGCR.

The signal sequence occupies residues 1–22; sequence MSPGAFRVALLPLFLLVCVTQQ. Residues 23-318 constitute a propeptide that is removed on maturation; that stretch reads KPLQNWEQAS…VGPLLARRKR (296 aa). Residues Asn70 and Asn135 are each glycosylated (N-linked (GlcNAc...) asparagine). An intrachain disulfide couples Cys155 to Cys236. Asn262 carries N-linked (GlcNAc...) asparagine glycosylation. Intrachain disulfides connect Cys326/Cys392, Cys355/Cys425, and Cys359/Cys427. The segment at 401–415 is interaction with ENG; sequence SILYKDDMGVPTLKY.

It belongs to the TGF-beta family. Homodimer; disulfide-linked. Detected in extracellular fluid as mature homodimer, and in complex with its propeptide. Interacts with ACVRL1, BMPR2 and ACVR2B with high affinity (in vitro). Identified in a complex with ACVRL1 and ACVR2B. Has ten times lower affinity for ACVR2A (in vitro). Interacts with ENG, forming a heterotetramer with a 2:2 stoichiometry. Can form a heteromeric complex with ENG and ACVRL1. Interacts with type I receptor ACVR1. In terms of processing, a reversible disulfide bond can be formed between the two subunits in the homodimer; this has no effect on GDF2 activity.

Its subcellular location is the secreted. Its function is as follows. Potent circulating inhibitor of angiogenesis. Signals through the type I activin receptor ACVRL1 but not other Alks. Signaling through SMAD1 in endothelial cells requires TGF-beta coreceptor endoglin/ENG. The protein is Growth/differentiation factor 2 (Gdf2) of Mus musculus (Mouse).